We begin with the raw amino-acid sequence, 267 residues long: Matrilysin (267 aa).

Positions 1–20 are cleaved as a signal peptide; the sequence is MAAMRLTLFRIVCLLPGCLA. Positions 21–97 are cleaved as a propeptide — activation peptide; it reads LPLSQEAGEV…PRCGVPDVAE (77 aa). Positions 88–95 match the Cysteine switch motif; sequence PRCGVPDV. Position 90 (C90) interacts with Zn(2+). D156 serves as a coordination point for Ca(2+). Residues H166 and D168 each contribute to the Zn(2+) site. Ca(2+) is bound by residues D173, G174, G176, and T178. Residue H181 participates in Zn(2+) binding. Residues G188, G190, and D192 each coordinate Ca(2+). Zn(2+) is bound at residue H194. Residues D196 and E199 each coordinate Ca(2+). H217 provides a ligand contact to Zn(2+). The active site involves E218. Zn(2+) is bound by residues H221 and H227.

Belongs to the peptidase M10A family. The cofactor is Ca(2+). Requires Zn(2+) as cofactor.

The protein resides in the secreted. The protein localises to the extracellular space. It is found in the extracellular matrix. It carries out the reaction Cleavage of 14-Ala-|-Leu-15 and 16-Tyr-|-Leu-17 in B chain of insulin. No action on collagen types I, II, IV, V. Cleaves gelatin chain alpha2(I) &gt; alpha1(I).. In terms of biological role, degrades casein, gelatins of types I, III, IV, and V, and fibronectin. Activates procollagenase. In Rattus norvegicus (Rat), this protein is Matrilysin (Mmp7).